The following is a 547-amino-acid chain: Chaperonin GroEL 2 (547 aa).

Residues 30–33 (TLGP), Lys-51, 87–91 (DGTTT), Gly-415, 479–481 (NAA), and Asp-495 each bind ATP. The disordered stretch occupies residues 526–547 (KEESAAPAGGGMGGMGGMGGMM). Gly residues predominate over residues 533-547 (AGGGMGGMGGMGGMM).

It belongs to the chaperonin (HSP60) family. Forms a cylinder of 14 subunits composed of two heptameric rings stacked back-to-back. Interacts with the co-chaperonin GroES.

The protein localises to the cytoplasm. It catalyses the reaction ATP + H2O + a folded polypeptide = ADP + phosphate + an unfolded polypeptide.. Functionally, together with its co-chaperonin GroES, plays an essential role in assisting protein folding. The GroEL-GroES system forms a nano-cage that allows encapsulation of the non-native substrate proteins and provides a physical environment optimized to promote and accelerate protein folding. The protein is Chaperonin GroEL 2 of Anaeromyxobacter sp. (strain Fw109-5).